A 396-amino-acid chain; its full sequence is Elongation factor Tu 2 (396 aa).

The region spanning lysine 10–glutamate 206 is the tr-type G domain. The tract at residues glycine 19 to threonine 26 is G1. Glycine 19–threonine 26 lines the GTP pocket. A Mg(2+)-binding site is contributed by threonine 26. A G2 region spans residues glycine 60–serine 64. The interval aspartate 81 to glycine 84 is G3. Residues aspartate 81–histidine 85 and asparagine 136–aspartate 139 contribute to the GTP site. The G4 stretch occupies residues asparagine 136–aspartate 139. The tract at residues serine 174–leucine 176 is G5.

It belongs to the TRAFAC class translation factor GTPase superfamily. Classic translation factor GTPase family. EF-Tu/EF-1A subfamily. Monomer.

The protein localises to the cytoplasm. It catalyses the reaction GTP + H2O = GDP + phosphate + H(+). GTP hydrolase that promotes the GTP-dependent binding of aminoacyl-tRNA to the A-site of ribosomes during protein biosynthesis. This is Elongation factor Tu 2 from Rhodospirillum rubrum (strain ATCC 11170 / ATH 1.1.1 / DSM 467 / LMG 4362 / NCIMB 8255 / S1).